A 390-amino-acid chain; its full sequence is Large ribosomal subunit protein mL44 (390 aa).

The N-terminal 59 residues, 1 to 59, are a transit peptide targeting the mitochondrion; the sequence is MGIVLKRAIAAGMKPFPNSTWHWSRTIRPFSQHLSSTCFLQQSSRFTSKRYLHLSTLTQ. One can recognise an RNase III domain in the interval 139 to 205; the sequence is AFVNTVPTNK…LAHIAKYWGI (67 aa). The region spanning 302-372 is the DRBM domain; it reads QPTRELAMLC…ATDALMKWYC (71 aa).

This sequence belongs to the ribonuclease III family. Mitochondrion-specific ribosomal protein mL44 subfamily. Component of the mitochondrial large ribosomal subunit (mt-LSU). Mature yeast 74S mitochondrial ribosomes consist of a small (37S) and a large (54S) subunit. The 37S small subunit contains a 15S ribosomal RNA (15S mt-rRNA) and 34 different proteins. The 54S large subunit contains a 21S rRNA (21S mt-rRNA) and 46 different proteins. mL44 forms a heterodimer with mL57 and stabilizes rRNA expansion segments 1/2 at a membrane-facing protuberance close to the point of attachment of the ribosome to the translocon in the membrane.

The protein localises to the mitochondrion. Component of the mitochondrial ribosome (mitoribosome), a dedicated translation machinery responsible for the synthesis of mitochondrial genome-encoded proteins, including at least some of the essential transmembrane subunits of the mitochondrial respiratory chain. The mitoribosomes are attached to the mitochondrial inner membrane and translation products are cotranslationally integrated into the membrane. The sequence is that of Large ribosomal subunit protein mL44 (MRPL3) from Saccharomyces cerevisiae (strain ATCC 204508 / S288c) (Baker's yeast).